The sequence spans 987 residues: Nuclear matrix constituent protein 1b (987 aa).

The tract at residues 1–25 is disordered; that stretch reads MASPRSAGGVGGGGGGGGGSGGAAA. Gly residues predominate over residues 8 to 24; sequence GGVGGGGGGGGGSGGAA. 2 coiled-coil regions span residues 403 to 545 and 594 to 717; these read LAEL…ERRA and LSKI…DREA. Composition is skewed to basic and acidic residues over residues 752–764 and 898–908; these read SDIN…HDNS and CKEHEYGDKGP. 2 disordered regions span residues 752–775 and 887–987; these read SDIN…FGRK and HDEA…FLIT. A compositionally biased stretch (polar residues) spans 944–954; the sequence is ATVSATETSNV. Residues 956–973 are compositionally biased toward acidic residues; it reads GPEDNNDSDEEDEEEEEE.

The protein belongs to the CRWN family. Interacts with SWI3C.

It localises to the nucleus matrix. It is found in the nucleus lamina. In terms of biological role, architectural component of nuclear structure that plays different roles in controlling nuclear size and morphology. Involved in the modification of chromatin accessibility by interacting with SWI3C, a component of the chromatin-remodeling complex, to thus reduce the suppression effect of the complex. Acts as positive regulator of drought resistance and modulates root growth. Positively regulates the expression of genes related to root growth and drought resistance. The polypeptide is Nuclear matrix constituent protein 1b (Oryza sativa subsp. japonica (Rice)).